The following is a 344-amino-acid chain: N-acetyl-gamma-glutamyl-phosphate reductase (344 aa).

Cys-150 is a catalytic residue.

Belongs to the NAGSA dehydrogenase family. Type 1 subfamily.

Its subcellular location is the cytoplasm. The catalysed reaction is N-acetyl-L-glutamate 5-semialdehyde + phosphate + NADP(+) = N-acetyl-L-glutamyl 5-phosphate + NADPH + H(+). It functions in the pathway amino-acid biosynthesis; L-arginine biosynthesis; N(2)-acetyl-L-ornithine from L-glutamate: step 3/4. Catalyzes the NADPH-dependent reduction of N-acetyl-5-glutamyl phosphate to yield N-acetyl-L-glutamate 5-semialdehyde. This is N-acetyl-gamma-glutamyl-phosphate reductase from Pseudomonas paraeruginosa (strain DSM 24068 / PA7) (Pseudomonas aeruginosa (strain PA7)).